A 170-amino-acid polypeptide reads, in one-letter code: UPF0251 protein MA_1017 (170 aa).

This sequence belongs to the UPF0251 family.

This is UPF0251 protein MA_1017 from Methanosarcina acetivorans (strain ATCC 35395 / DSM 2834 / JCM 12185 / C2A).